We begin with the raw amino-acid sequence, 739 residues long: Phosphoribosylformylglycinamidine synthase subunit PurL (739 aa).

The active site involves histidine 54. ATP contacts are provided by tyrosine 57 and lysine 96. Glutamate 98 serves as a coordination point for Mg(2+). Substrate-binding positions include 99 to 102 (SHNH) and arginine 121. The active-site Proton acceptor is histidine 100. A Mg(2+)-binding site is contributed by aspartate 122. Position 245 (glutamine 245) interacts with substrate. Aspartate 273 lines the Mg(2+) pocket. 317 to 319 (ESQ) lines the substrate pocket. 2 residues coordinate ATP: aspartate 500 and glycine 537. Position 538 (asparagine 538) interacts with Mg(2+). Serine 540 serves as a coordination point for substrate.

This sequence belongs to the FGAMS family. Monomer. Part of the FGAM synthase complex composed of 1 PurL, 1 PurQ and 2 PurS subunits.

It localises to the cytoplasm. The catalysed reaction is N(2)-formyl-N(1)-(5-phospho-beta-D-ribosyl)glycinamide + L-glutamine + ATP + H2O = 2-formamido-N(1)-(5-O-phospho-beta-D-ribosyl)acetamidine + L-glutamate + ADP + phosphate + H(+). It functions in the pathway purine metabolism; IMP biosynthesis via de novo pathway; 5-amino-1-(5-phospho-D-ribosyl)imidazole from N(2)-formyl-N(1)-(5-phospho-D-ribosyl)glycinamide: step 1/2. Functionally, part of the phosphoribosylformylglycinamidine synthase complex involved in the purines biosynthetic pathway. Catalyzes the ATP-dependent conversion of formylglycinamide ribonucleotide (FGAR) and glutamine to yield formylglycinamidine ribonucleotide (FGAM) and glutamate. The FGAM synthase complex is composed of three subunits. PurQ produces an ammonia molecule by converting glutamine to glutamate. PurL transfers the ammonia molecule to FGAR to form FGAM in an ATP-dependent manner. PurS interacts with PurQ and PurL and is thought to assist in the transfer of the ammonia molecule from PurQ to PurL. The polypeptide is Phosphoribosylformylglycinamidine synthase subunit PurL (Bacillus cereus (strain G9842)).